Here is a 192-residue protein sequence, read N- to C-terminus: Pyridoxal 5'-phosphate synthase subunit PdxT (192 aa).

L-glutamine is bound at residue 53–55 (GES). Cysteine 82 functions as the Nucleophile in the catalytic mechanism. Residues arginine 108 and 134-135 (IR) each bind L-glutamine. Catalysis depends on charge relay system residues histidine 170 and glutamate 172.

This sequence belongs to the glutaminase PdxT/SNO family. In the presence of PdxS, forms a dodecamer of heterodimers. Only shows activity in the heterodimer.

The enzyme catalyses aldehydo-D-ribose 5-phosphate + D-glyceraldehyde 3-phosphate + L-glutamine = pyridoxal 5'-phosphate + L-glutamate + phosphate + 3 H2O + H(+). The catalysed reaction is L-glutamine + H2O = L-glutamate + NH4(+). Its pathway is cofactor biosynthesis; pyridoxal 5'-phosphate biosynthesis. Functionally, catalyzes the hydrolysis of glutamine to glutamate and ammonia as part of the biosynthesis of pyridoxal 5'-phosphate. The resulting ammonia molecule is channeled to the active site of PdxS. The chain is Pyridoxal 5'-phosphate synthase subunit PdxT from Methanothermobacter thermautotrophicus (strain ATCC 29096 / DSM 1053 / JCM 10044 / NBRC 100330 / Delta H) (Methanobacterium thermoautotrophicum).